The primary structure comprises 226 residues: uncharacterized protein (226 aa).

Belongs to the mimivirus L246/L426 family.

This is an uncharacterized protein from Acanthamoeba polyphaga mimivirus (APMV).